The sequence spans 274 residues: Ribonucleoside-diphosphate reductase small chain (274 aa).

Residues aspartate 70, glutamate 101, and histidine 104 each contribute to the Fe cation site. The active site involves tyrosine 108. Fe cation-binding residues include glutamate 163, glutamate 197, and histidine 200.

The protein belongs to the ribonucleoside diphosphate reductase small chain family. Heterodimer of a large and a small chain. Requires Fe cation as cofactor.

It carries out the reaction a 2'-deoxyribonucleoside 5'-diphosphate + [thioredoxin]-disulfide + H2O = a ribonucleoside 5'-diphosphate + [thioredoxin]-dithiol. Ribonucleoside-diphosphate reductase holoenzyme provides the precursors necessary for viral DNA synthesis. Allows virus growth in non-dividing cells. Catalyzes the biosynthesis of deoxyribonucleotides from the corresponding ribonucleotides. The sequence is that of Ribonucleoside-diphosphate reductase small chain from Sus scrofa (Pig).